The primary structure comprises 622 residues: Elongation factor 4 (622 aa).

Residues 17–198 (ELLRNFCIIA…QIVRQIPAPV (182 aa)) enclose the tr-type G domain. GTP contacts are provided by residues 29 to 34 (DHGKST) and 145 to 148 (NKID).

The protein belongs to the TRAFAC class translation factor GTPase superfamily. Classic translation factor GTPase family. LepA subfamily.

Its subcellular location is the cell membrane. The catalysed reaction is GTP + H2O = GDP + phosphate + H(+). Functionally, required for accurate and efficient protein synthesis under certain stress conditions. May act as a fidelity factor of the translation reaction, by catalyzing a one-codon backward translocation of tRNAs on improperly translocated ribosomes. Back-translocation proceeds from a post-translocation (POST) complex to a pre-translocation (PRE) complex, thus giving elongation factor G a second chance to translocate the tRNAs correctly. Binds to ribosomes in a GTP-dependent manner. The polypeptide is Elongation factor 4 (Kineococcus radiotolerans (strain ATCC BAA-149 / DSM 14245 / SRS30216)).